We begin with the raw amino-acid sequence, 51 residues long: Large ribosomal subunit protein bL33 (51 aa).

Belongs to the bacterial ribosomal protein bL33 family.

The polypeptide is Large ribosomal subunit protein bL33 (Psychrobacter arcticus (strain DSM 17307 / VKM B-2377 / 273-4)).